A 946-amino-acid polypeptide reads, in one-letter code: Ent-kaur-16-ene synthase (946 aa).

Residues aspartate 656, glutamate 660, asparagine 839, aspartate 840, serine 843, and aspartate 847 each coordinate Mg(2+). The short motif at 656-660 is the DEXXE motif element; the sequence is DEFFE.

Belongs to the terpene synthase family. It depends on Mg(2+) as a cofactor.

It catalyses the reaction ent-copalyl diphosphate = ent-kaur-16-ene + diphosphate. It carries out the reaction (2E,6E,10E)-geranylgeranyl diphosphate = ent-copalyl diphosphate. The protein operates within plant hormone biosynthesis; gibberellin biosynthesis. Its function is as follows. Catalyzes the conversion of geranylgeranyl diphosphate to the gibberellin precursor ent-kaurene diphosphate in a two step process. The sequence is that of Ent-kaur-16-ene synthase from Phaeosphaeria sp. (strain L487).